A 408-amino-acid chain; its full sequence is Argininosuccinate synthase (408 aa).

Residue 14-22 (AYSGGLDTS) coordinates ATP. L-citrulline contacts are provided by Tyr92 and Ser97. Position 122 (Gly122) interacts with ATP. L-aspartate is bound by residues Thr124, Asn128, and Asp129. Asn128 provides a ligand contact to L-citrulline. L-citrulline contacts are provided by Arg132, Ser181, Ser190, Glu266, and Tyr278.

Belongs to the argininosuccinate synthase family. Type 1 subfamily. In terms of assembly, homotetramer.

It localises to the cytoplasm. The catalysed reaction is L-citrulline + L-aspartate + ATP = 2-(N(omega)-L-arginino)succinate + AMP + diphosphate + H(+). It participates in amino-acid biosynthesis; L-arginine biosynthesis; L-arginine from L-ornithine and carbamoyl phosphate: step 2/3. In Moorella thermoacetica (strain ATCC 39073 / JCM 9320), this protein is Argininosuccinate synthase.